The primary structure comprises 147 residues: Large ribosomal subunit protein uL15 (147 aa).

The interval 21–49 (RVGRGEGSKGKTAGRGTKGTKARAPVRPG) is disordered.

Belongs to the universal ribosomal protein uL15 family. Part of the 50S ribosomal subunit.

In terms of biological role, binds to the 23S rRNA. This is Large ribosomal subunit protein uL15 from Tropheryma whipplei (strain TW08/27) (Whipple's bacillus).